The chain runs to 413 residues: Gamma-glutamyl phosphate reductase (413 aa).

Belongs to the gamma-glutamyl phosphate reductase family.

It localises to the cytoplasm. The catalysed reaction is L-glutamate 5-semialdehyde + phosphate + NADP(+) = L-glutamyl 5-phosphate + NADPH + H(+). It participates in amino-acid biosynthesis; L-proline biosynthesis; L-glutamate 5-semialdehyde from L-glutamate: step 2/2. Functionally, catalyzes the NADPH-dependent reduction of L-glutamate 5-phosphate into L-glutamate 5-semialdehyde and phosphate. The product spontaneously undergoes cyclization to form 1-pyrroline-5-carboxylate. This Salinispora tropica (strain ATCC BAA-916 / DSM 44818 / JCM 13857 / NBRC 105044 / CNB-440) protein is Gamma-glutamyl phosphate reductase.